The sequence spans 465 residues: FeMo cofactor biosynthesis protein FixZ (465 aa).

Positions 1 to 36 are disordered; sequence MSEPEIKVGKTSSALFDRAPMAPSMPGGRASSSHGL. Residues 61–312 form the Radical SAM core domain; it reads HHYFARMHXX…MRHCQQCRAD (252 aa). [4Fe-4S] cluster is bound by residues cysteine 75 and cysteine 79. Position 81 (tyrosine 81) interacts with S-adenosyl-L-methionine. A [4Fe-4S] cluster-binding site is contributed by cysteine 82. S-adenosyl-L-methionine-binding residues include glycine 129, threonine 181, and isoleucine 233. [4Fe-4S] cluster-binding residues include cysteine 306 and cysteine 309.

The protein belongs to the radical SAM superfamily. NifB family. Requires [4Fe-4S] cluster as cofactor.

Its pathway is cofactor biosynthesis; Fe-Mo cofactor biosynthesis. Its function is as follows. Involved in the biosynthesis of the iron-molybdenum cofactor (FeMo-co or M-cluster) found in the dinitrogenase enzyme of the nitrogenase complex in nitrogen-fixing microorganisms. Catalyzes the crucial step of radical SAM-dependent carbide insertion that occurs concomitant with the insertion of a 9th sulfur and the rearrangement/coupling of two [4Fe-4S] clusters into a [8Fe-9S-C] cluster, the precursor to the M-cluster. This Rhizobium leguminosarum protein is FeMo cofactor biosynthesis protein FixZ (fixZ).